A 624-amino-acid polypeptide reads, in one-letter code: Kelch-like protein diablo (624 aa).

Positions Met-1 to Thr-21 are enriched in low complexity. The tract at residues Met-1–His-55 is disordered. Gly residues predominate over residues Gly-22 to Ser-37. Positions Cys-73–Glu-140 constitute a BTB domain. The region spanning Cys-175 to Gly-277 is the BACK domain. Kelch repeat units follow at residues Val-324–Asp-370, Leu-372–Gly-418, Phe-419–Gly-465, Leu-467–Asn-512, Ile-514–Gly-559, and Gln-560–Ala-606.

It participates in protein modification; protein ubiquitination. In terms of biological role, probable substrate-specific adapter of an E3 ubiquitin-protein ligase complex which mediates the ubiquitination and subsequent proteasomal degradation of target proteins. May have a role in synapse differentiation and growth. This is Kelch-like protein diablo from Drosophila virilis (Fruit fly).